The following is a 552-amino-acid chain: Glutamyl-tRNA reductase 1, chloroplastic (552 aa).

Substrate contacts are provided by residues 150 to 153, Ser-210, 215 to 217, and Gln-221; these read TCNR and EGQ. The active-site Nucleophile is the Cys-151. Residue 292–297 coordinates NADP(+); that stretch reads GAGKMG.

Belongs to the glutamyl-tRNA reductase family. As to expression, primarily in cotyledons and hypocotyls of greening cucumber seedlings.

Its subcellular location is the plastid. It localises to the chloroplast. It catalyses the reaction (S)-4-amino-5-oxopentanoate + tRNA(Glu) + NADP(+) = L-glutamyl-tRNA(Glu) + NADPH + H(+). The protein operates within porphyrin-containing compound metabolism; protoporphyrin-IX biosynthesis; 5-aminolevulinate from L-glutamyl-tRNA(Glu): step 1/2. Functionally, catalyzes the NADPH-dependent reduction of glutamyl-tRNA(Glu) to glutamate 1-semialdehyde (GSA). This chain is Glutamyl-tRNA reductase 1, chloroplastic (HEMA1), found in Cucumis sativus (Cucumber).